Consider the following 31-residue polypeptide: Cytochrome b6-f complex subunit 6 (31 aa).

Residues 4 to 24 (IISYFLFLIGALTLALVLFIG) traverse the membrane as a helical segment.

The protein belongs to the PetL family. In terms of assembly, the 4 large subunits of the cytochrome b6-f complex are cytochrome b6, subunit IV (17 kDa polypeptide, PetD), cytochrome f and the Rieske protein, while the 4 small subunits are PetG, PetL, PetM and PetN. The complex functions as a dimer.

The protein resides in the plastid. It is found in the chloroplast thylakoid membrane. Functionally, component of the cytochrome b6-f complex, which mediates electron transfer between photosystem II (PSII) and photosystem I (PSI), cyclic electron flow around PSI, and state transitions. PetL is important for photoautotrophic growth as well as for electron transfer efficiency and stability of the cytochrome b6-f complex. The chain is Cytochrome b6-f complex subunit 6 from Marchantia polymorpha (Common liverwort).